A 295-amino-acid chain; its full sequence is Biliverdin reductase A (295 aa).

A propeptide spanning residues 1 to 2 is cleaved from the precursor; it reads MS. NAD(+)-binding positions include 18-19, 76-79, and Tyr97; these read RA and SSSH. The residue at position 154 (Ser154) is a Phosphoserine. Ser167 is a binding site for NAD(+). Residue Thr173 is modified to Phosphothreonine. 2 positions are modified to phosphoserine: Ser177 and Ser229. Lys247 and Lys252 each carry N6-acetyllysine. 4 residues coordinate Zn(2+): His279, Cys280, Cys291, and His292.

The protein belongs to the Gfo/Idh/MocA family. Biliverdin reductase subfamily. In terms of assembly, monomer. Zn(2+) serves as cofactor.

Its subcellular location is the cytoplasm. The protein localises to the cytosol. It carries out the reaction (4Z,15Z)-bilirubin IXalpha + NAD(+) = biliverdin IXalpha + NADH + H(+). It catalyses the reaction (4Z,15Z)-bilirubin IXalpha + NADP(+) = biliverdin IXalpha + NADPH + H(+). The protein operates within porphyrin-containing compound metabolism; protoheme degradation. Functionally, reduces the gamma-methene bridge of the open tetrapyrrole, biliverdin IXalpha, to bilirubin with the concomitant oxidation of a NADH or NADPH cofactor. Does not reduce bilirubin IXbeta. Uses the reactants NADH or NADPH depending on the pH; NADH is used at the acidic pH range (6-6.9) and NADPH at the alkaline range (8.5-8.7). NADPH, however, is the probable reactant in biological systems. This is Biliverdin reductase A from Mus musculus (Mouse).